The chain runs to 192 residues: UPF0301 protein Rru_A3059 (192 aa).

Belongs to the UPF0301 (AlgH) family.

This Rhodospirillum rubrum (strain ATCC 11170 / ATH 1.1.1 / DSM 467 / LMG 4362 / NCIMB 8255 / S1) protein is UPF0301 protein Rru_A3059.